The chain runs to 369 residues: Anhydro-N-acetylmuramic acid kinase (369 aa).

An ATP-binding site is contributed by 12-19 (GTSLDGVD).

It belongs to the anhydro-N-acetylmuramic acid kinase family.

The catalysed reaction is 1,6-anhydro-N-acetyl-beta-muramate + ATP + H2O = N-acetyl-D-muramate 6-phosphate + ADP + H(+). Its pathway is amino-sugar metabolism; 1,6-anhydro-N-acetylmuramate degradation. It participates in cell wall biogenesis; peptidoglycan recycling. Its function is as follows. Catalyzes the specific phosphorylation of 1,6-anhydro-N-acetylmuramic acid (anhMurNAc) with the simultaneous cleavage of the 1,6-anhydro ring, generating MurNAc-6-P. Is required for the utilization of anhMurNAc either imported from the medium or derived from its own cell wall murein, and thus plays a role in cell wall recycling. This chain is Anhydro-N-acetylmuramic acid kinase, found in Actinobacillus pleuropneumoniae serotype 3 (strain JL03).